The chain runs to 344 residues: DNA-directed RNA polymerase subunit alpha (344 aa).

The tract at residues 1 to 238 is alpha N-terminal domain (alpha-NTD); sequence MKVIKTAPLI…KQLGVFGERP (238 aa). The tract at residues 254-344 is alpha C-terminal domain (alpha-CTD); sequence AKDLSAKIES…EKLEDKGGND (91 aa).

Belongs to the RNA polymerase alpha chain family. As to quaternary structure, homodimer. The RNAP catalytic core consists of 2 alpha, 1 beta, 1 beta' and 1 omega subunit. When a sigma factor is associated with the core the holoenzyme is formed, which can initiate transcription.

The catalysed reaction is RNA(n) + a ribonucleoside 5'-triphosphate = RNA(n+1) + diphosphate. Its function is as follows. DNA-dependent RNA polymerase catalyzes the transcription of DNA into RNA using the four ribonucleoside triphosphates as substrates. The sequence is that of DNA-directed RNA polymerase subunit alpha from Helicobacter pylori (strain ATCC 700392 / 26695) (Campylobacter pylori).